A 381-amino-acid chain; its full sequence is Homoserine O-succinyltransferase (381 aa).

The 316-residue stretch at 45-360 folds into the AB hydrolase-1 domain; that stretch reads NAVLVCHALN…PHGHDAFLLD (316 aa). S151 acts as the Nucleophile in catalysis. R221 lines the substrate pocket. Residues D321 and H354 contribute to the active site. D355 contacts substrate.

This sequence belongs to the AB hydrolase superfamily. MetX family. In terms of assembly, homodimer.

It is found in the cytoplasm. It carries out the reaction L-homoserine + succinyl-CoA = O-succinyl-L-homoserine + CoA. It functions in the pathway amino-acid biosynthesis; L-methionine biosynthesis via de novo pathway; O-succinyl-L-homoserine from L-homoserine: step 1/1. Its function is as follows. Transfers a succinyl group from succinyl-CoA to L-homoserine, forming succinyl-L-homoserine. The polypeptide is Homoserine O-succinyltransferase (Burkholderia pseudomallei (strain 1710b)).